Here is a 103-residue protein sequence, read N- to C-terminus: MYAVIVSGGKQHRVKEGERLKLEKIEVETGGVVEFDKVLLVANGDDVKVGAPVVEGAKVTAEVVAHGRHKKVNIIKFRRRKHHMKRMGHRQWFTEVKITGITG.

Belongs to the bacterial ribosomal protein bL21 family. In terms of assembly, part of the 50S ribosomal subunit. Contacts protein L20.

In terms of biological role, this protein binds to 23S rRNA in the presence of protein L20. In Hahella chejuensis (strain KCTC 2396), this protein is Large ribosomal subunit protein bL21.